We begin with the raw amino-acid sequence, 163 residues long: Lysosomal enzyme trafficking factor (163 aa).

A run of 2 helical transmembrane segments spans residues 40 to 60 (MGWIGVGLYLLASAAAFYYVF) and 98 to 118 (LPFWFWTVVFLIPYLQMFLFL).

The protein belongs to the LYSET family. As to quaternary structure, interacts with GNPTAB; this interaction is important for proper localization of GNPTAB in Golgi stacks. Interacts with MBTPS1.

Its subcellular location is the golgi apparatus membrane. Required for mannose-6-phosphate-dependent trafficking of lysosomal enzymes. LYSET bridges GlcNAc-1-phosphate transferase (GNPTAB), to the membrane-bound transcription factor site-1 protease (MBTPS1), thus allowing proteolytic activation of the GNPTAB. GNPTAB is involved in the regulation of M6P-dependent Golgi-to-lysosome trafficking of lysosomal enzymes. LYSET is thus an essential factor for maturation and delivery of lysosomal hydrolases. The chain is Lysosomal enzyme trafficking factor (LYSET) from Bos taurus (Bovine).